Reading from the N-terminus, the 288-residue chain is Mortality factor 4-like protein 2 (288 aa).

Residues 1–15 (MSSRKQASQTRGQQS) show a composition bias toward polar residues. The interval 1–115 (MSSRKQASQT…DPTVESEEAF (115 aa)) is disordered. Position 71 is a phosphoserine (Ser71). In terms of domain architecture, MRG spans 117-288 (SRMEVKVKIP…ASADYHRKAL (172 aa)).

Component of the NuA4 histone acetyltransferase complex which contains the catalytic subunit KAT5/TIP60 and the subunits EP400, TRRAP/PAF400, BRD8/SMAP, EPC1, DMAP1/DNMAP1, RUVBL1/TIP49, RUVBL2, ING3, actin, ACTL6A/BAF53A, MORF4L1/MRG15, MORF4L2/MRGX, MRGBP, YEATS4/GAS41 and VPS72/YL1. The NuA4 complex interacts with MYC and the adenovirus E1A protein. MORF4L1 may also participate in the formation of NuA4 related complexes which lack the KAT5/TIP60 catalytic subunit, but which include the SWI/SNF related protein SRCAP. Component of the MSIN3A histone deacetylase complex, which includes SIN3A, HDAC2, ARID4B, MORF4L1, RBBP4/RbAp48, and RBBP7/RbAp46. Interacts with MRFAP1 and RB1. May also interact with one or more as yet undefined members of the TLE (transducin-like enhancer of split) family of transcriptional repressors.

Its subcellular location is the nucleus. Component of the NuA4 histone acetyltransferase complex which is involved in transcriptional activation of select genes principally by acetylation of nucleosomal histone H4 and H2A. This modification may both alter nucleosome - DNA interactions and promote interaction of the modified histones with other proteins which positively regulate transcription. This complex may be required for the activation of transcriptional programs associated with oncogene and proto-oncogene mediated growth induction, tumor suppressor mediated growth arrest and replicative senescence, apoptosis, and DNA repair. The NuA4 complex ATPase and helicase activities seem to be, at least in part, contributed by the association of RUVBL1 and RUVBL2 with EP400. NuA4 may also play a direct role in DNA repair when directly recruited to sites of DNA damage. Also a component of the MSIN3A complex which acts to repress transcription by deacetylation of nucleosomal histones. The sequence is that of Mortality factor 4-like protein 2 (Morf4l2) from Mus musculus (Mouse).